A 137-amino-acid polypeptide reads, in one-letter code: Basic phospholipase A2 homolog Ts-R6 (137 aa).

A signal peptide spans 1–16; that stretch reads MRTLWIMAVLLLGVEG. 7 disulfide bridges follow: cysteine 42–cysteine 130, cysteine 44–cysteine 60, cysteine 59–cysteine 110, cysteine 65–cysteine 137, cysteine 66–cysteine 103, cysteine 73–cysteine 97, and cysteine 91–cysteine 101.

In terms of tissue distribution, expressed by the venom gland.

It is found in the secreted. Functionally, snake venom phospholipase A2 homolog that induces local edema a few hours after injection (5-10 ug) in the hind paw and shows weak anticoagulant and myotoxic activities. The polypeptide is Basic phospholipase A2 homolog Ts-R6 (Trimeresurus stejnegeri (Chinese green tree viper)).